The chain runs to 331 residues: Transmembrane protein 59-like (331 aa).

The N-terminal stretch at 1-21 (MAAVALPLLLLLASPATPTPA) is a signal peptide. Residues 15 to 62 (PATPTPARDPFSPQLGDTQRCQQRCRQRHPGLPPAQPEPEGPSESPNN) are disordered. Over residues 45–54 (GLPPAQPEPE) the composition is skewed to pro residues. The N-linked (GlcNAc...) asparagine glycan is linked to asparagine 90. Residues 258-278 (VLFCCLFLSVLIILWLSCCTL) form a helical membrane-spanning segment. A Microbody targeting signal motif is present at residues 329-331 (TTL).

This sequence belongs to the TMEM59 family.

Its subcellular location is the golgi apparatus membrane. Modulates the O-glycosylation and complex N-glycosylation steps occurring during the Golgi maturation of APP. Inhibits APP transport to the cell surface and further shedding. The chain is Transmembrane protein 59-like (Tmem59l) from Rattus norvegicus (Rat).